The sequence spans 355 residues: Replication-associated protein (355 aa).

In terms of domain architecture, CRESS-DNA virus Rep endonuclease spans 11–114; it reads LHRTANTFLT…PLALFERGTF (104 aa). An RCR-1 motif is present at residues 18–21; that stretch reads FLTY. Residues Glu52, His60, and His62 each contribute to the a divalent metal cation site. An RCR-2 motif is present at residues 60–62; sequence HLH. The active-site For DNA cleavage activity is the Tyr100. Positions 100 to 103 match the RCR-3 motif; sequence YILK. Glu104 serves as a coordination point for a divalent metal cation. Residues 175–187 form an oligomerization region; the sequence is SANKLFPDIQEEF. 229 to 236 is a binding site for ATP; sequence GPTRTGKS. A transactivation region spans residues 252–270; sequence VDWSSYNEDAIYNIVDDIP. A Nuclear localization signal motif is present at residues 292 to 303; sequence KYGKKKKVQMKS.

It belongs to the geminiviridae Rep protein family. In terms of assembly, homooligomer. Rep binds to repeated DNA motifs (iterons). Forms the O-complex, which is a Rep-DNA complex involved in the initiation of RCR. Part of the C- and V-complexes which are RepA-Rep-DNA complexes involved in the c-sense and v-sense transcription. Requires Mg(2+) as cofactor. It depends on Mn(2+) as a cofactor.

It localises to the host nucleus. Its function is as follows. Essential for the replication of viral ssDNA. The closed circular ssDNA genome is first converted to a superhelical dsDNA. Rep binds a specific region at the genome origin of replication. It introduces an endonucleolytic nick within the conserved sequence 5'-TAATATTAC-3' in the intergenic region of the genome present in all geminiviruses, thereby initiating the rolling circle replication (RCR). Following cleavage, binds covalently to the 5'-phosphate of DNA as a tyrosyl ester. The cleavage gives rise to a free 3'-OH that serves as a primer for the cellular DNA polymerase. The polymerase synthesizes the (+) strand DNA by rolling circle mechanism. After one round of replication, a Rep-catalyzed nucleotidyl transfer reaction releases a circular single-stranded virus genome, thereby terminating the replication. Displays origin-specific DNA cleavage, nucleotidyl transferase, ATPase and helicase activities. Acts as an inhibitor of C-sense gene transcription. The protein is Replication-associated protein of Maize streak virus genotype D (isolate Raw) (MSV).